The chain runs to 1590 residues: Pentafunctional AROM polypeptide (1590 aa).

Residues 1–387 (MGSTTFENPT…YEPKASVVED (387 aa)) are 3-dehydroquinate synthase. Residues 49-51 (DTN), 86-89 (ENSK), 117-119 (GGV), and Asp122 contribute to the NAD(+) site. Residue Arg133 participates in 7-phospho-2-dehydro-3-deoxy-D-arabino-heptonate binding. 142–143 (TT) lines the NAD(+) pocket. The 7-phospho-2-dehydro-3-deoxy-D-arabino-heptonate site is built by Asp149 and Lys155. NAD(+) is bound at residue Lys164. Asn165 is a binding site for 7-phospho-2-dehydro-3-deoxy-D-arabino-heptonate. Residues 182–185 (FLET) and Asn193 each bind NAD(+). Position 197 (Glu197) interacts with Zn(2+). 7-phospho-2-dehydro-3-deoxy-D-arabino-heptonate is bound by residues 197–200 (EVVK) and Lys253. Glu263 functions as the Proton acceptor; for 3-dehydroquinate synthase activity in the catalytic mechanism. 7-phospho-2-dehydro-3-deoxy-D-arabino-heptonate is bound by residues 267 to 271 (RNILN) and His274. His274 provides a ligand contact to Zn(2+). The active-site Proton acceptor; for 3-dehydroquinate synthase activity is the His278. The 7-phospho-2-dehydro-3-deoxy-D-arabino-heptonate site is built by His290 and Lys359. Residue His290 coordinates Zn(2+). Positions 400–841 (VRPSVPETLN…WDILSKSFQV (442 aa)) are EPSP synthase. The For EPSP synthase activity role is filled by Cys823. The tract at residues 863 to 1055 (DKSIFIIGMR…RNKPQSFFVS (193 aa)) is shikimate kinase. 870–877 (GMRGAGKT) is a binding site for ATP. The segment at 1056–1276 (LTMPDISGAA…AAPGQLSAAE (221 aa)) is 3-dehydroquinase. The Proton acceptor; for 3-dehydroquinate dehydratase activity role is filled by His1179. Catalysis depends on Lys1207, which acts as the Schiff-base intermediate with substrate; for 3-dehydroquinate dehydratase activity. Positions 1289–1590 (PKSFYLFGTP…KMDKHPTFVC (302 aa)) are shikimate dehydrogenase.

This sequence in the N-terminal section; belongs to the sugar phosphate cyclases superfamily. Dehydroquinate synthase family. In the 2nd section; belongs to the EPSP synthase family. The protein in the 3rd section; belongs to the shikimate kinase family. It in the 4th section; belongs to the type-I 3-dehydroquinase family. This sequence in the C-terminal section; belongs to the shikimate dehydrogenase family. As to quaternary structure, homodimer. Zn(2+) serves as cofactor.

The protein resides in the cytoplasm. It carries out the reaction 7-phospho-2-dehydro-3-deoxy-D-arabino-heptonate = 3-dehydroquinate + phosphate. It catalyses the reaction 3-dehydroquinate = 3-dehydroshikimate + H2O. The enzyme catalyses shikimate + NADP(+) = 3-dehydroshikimate + NADPH + H(+). The catalysed reaction is shikimate + ATP = 3-phosphoshikimate + ADP + H(+). It carries out the reaction 3-phosphoshikimate + phosphoenolpyruvate = 5-O-(1-carboxyvinyl)-3-phosphoshikimate + phosphate. It participates in metabolic intermediate biosynthesis; chorismate biosynthesis; chorismate from D-erythrose 4-phosphate and phosphoenolpyruvate: step 2/7. It functions in the pathway metabolic intermediate biosynthesis; chorismate biosynthesis; chorismate from D-erythrose 4-phosphate and phosphoenolpyruvate: step 3/7. The protein operates within metabolic intermediate biosynthesis; chorismate biosynthesis; chorismate from D-erythrose 4-phosphate and phosphoenolpyruvate: step 4/7. Its pathway is metabolic intermediate biosynthesis; chorismate biosynthesis; chorismate from D-erythrose 4-phosphate and phosphoenolpyruvate: step 5/7. It participates in metabolic intermediate biosynthesis; chorismate biosynthesis; chorismate from D-erythrose 4-phosphate and phosphoenolpyruvate: step 6/7. Functionally, the AROM polypeptide catalyzes 5 consecutive enzymatic reactions in prechorismate polyaromatic amino acid biosynthesis. This Sclerotinia sclerotiorum (White mold) protein is Pentafunctional AROM polypeptide.